We begin with the raw amino-acid sequence, 432 residues long: Enolase (432 aa).

Position 166 (Q166) interacts with (2R)-2-phosphoglycerate. E210 (proton donor) is an active-site residue. Residues D247, E288, and D315 each coordinate Mg(2+). Positions 340, 369, 370, and 391 each coordinate (2R)-2-phosphoglycerate. K340 acts as the Proton acceptor in catalysis.

It belongs to the enolase family. It depends on Mg(2+) as a cofactor.

It is found in the cytoplasm. It localises to the secreted. The protein localises to the cell surface. The catalysed reaction is (2R)-2-phosphoglycerate = phosphoenolpyruvate + H2O. The protein operates within carbohydrate degradation; glycolysis; pyruvate from D-glyceraldehyde 3-phosphate: step 4/5. In terms of biological role, catalyzes the reversible conversion of 2-phosphoglycerate (2-PG) into phosphoenolpyruvate (PEP). It is essential for the degradation of carbohydrates via glycolysis. The polypeptide is Enolase (Aeropyrum pernix (strain ATCC 700893 / DSM 11879 / JCM 9820 / NBRC 100138 / K1)).